The following is a 187-amino-acid chain: Adenylate kinase (187 aa).

10–15 (GSGKGT) contributes to the ATP binding site. The tract at residues 30–59 (STGDLLRSEVVAGTPLGLQAKQVMAQGDLV) is NMP. AMP-binding positions include Thr-31, Arg-36, 57–59 (DLV), 85–88 (GYPR), and Gln-92. The LID stretch occupies residues 126 to 136 (GRAQAEGREDD). Residue Arg-127 participates in ATP binding. AMP is bound by residues Arg-133 and Arg-144. Position 172 (Gly-172) interacts with ATP.

It belongs to the adenylate kinase family. Monomer.

It localises to the cytoplasm. The catalysed reaction is AMP + ATP = 2 ADP. It participates in purine metabolism; AMP biosynthesis via salvage pathway; AMP from ADP: step 1/1. Its function is as follows. Catalyzes the reversible transfer of the terminal phosphate group between ATP and AMP. Plays an important role in cellular energy homeostasis and in adenine nucleotide metabolism. This Xylella fastidiosa (strain M12) protein is Adenylate kinase.